The chain runs to 535 residues: Secreted lipase 5 (535 aa).

The N-terminal stretch at 1 to 17 (MHLKSLLLAALPLLLEA) is a signal peptide. Residues Asn-32 and Asn-119 are each glycosylated (N-linked (GlcNAc...) asparagine). Ser-241 acts as the Acyl-ester intermediate in catalysis. N-linked (GlcNAc...) asparagine glycosylation is found at Asn-282, Asn-341, Asn-347, and Asn-432.

Belongs to the type-B carboxylesterase/lipase family.

It localises to the secreted. The catalysed reaction is a carboxylic ester + H2O = an alcohol + a carboxylate + H(+). Functionally, secreted lipase involved in plant virulence. Has a substrate preference for p-nitrophenyl esters with a carbon chain length of C8 (p-nitrophenyl caprylate). The protein is Secreted lipase 5 of Gibberella zeae (strain ATCC MYA-4620 / CBS 123657 / FGSC 9075 / NRRL 31084 / PH-1) (Wheat head blight fungus).